The primary structure comprises 1658 residues: Silent chromatin protein ESC1 (1658 aa).

A compositionally biased stretch (basic and acidic residues) spans 36–54 (DSKMKDQHGYSRVHNDKYR). Disordered regions lie at residues 36–76 (DSKM…SSHI) and 156–499 (TSFQ…LENE). Acidic residues-rich tracts occupy residues 205–214 (LENDEYELSE) and 245–254 (SNDEYAEEEG). The segment covering 262–286 (GQEQANVENATQISSSDSSEGQNYS) has biased composition (polar residues). The span at 289 to 305 (VEMELEDDIDVESDAEK) shows a compositional bias: acidic residues. Residues 335 to 352 (VIEKYESDEHKVHQRYSE) are compositionally biased toward basic and acidic residues. Residues 365 to 375 (VDDESEDEESQ) show a composition bias toward acidic residues. Basic and acidic residues predominate over residues 386-397 (VYHHNEHELDDK). Positions 398 to 407 (ELIEDIESSD) are enriched in acidic residues. Over residues 408–417 (SESQSAQESE) the composition is skewed to low complexity. Composition is skewed to basic and acidic residues over residues 425–435 (EYKMKNEKSTS), 442–461 (SESRDQGFAKDAYTKNKVEQ), and 471–482 (DDIIRSSLDKNF). Position 500 is a phosphothreonine (Thr500). Phosphoserine is present on Ser532. Disordered regions lie at residues 550–584 (SRNSNCPQKEEQVSESYLGHSNGSNLSGRSLDESE) and 589–608 (LKDFTGENNNNLKTDRGDLS). Positions 568 to 577 (GHSNGSNLSG) are enriched in polar residues. Ser579, Ser583, Ser608, and Ser662 each carry phosphoserine. Disordered regions lie at residues 770–819 (SKET…EDNT), 863–964 (EMSS…VKGT), and 1082–1115 (ENNTNMHDQVSQACSDSDRDQDSTAEKNVEGSAK). Residues 800–812 (QSKNFPGVANSTD) are compositionally biased toward polar residues. Phosphoserine is present on residues Ser865 and Ser866. The span at 869-878 (ECVKQNDDGS) shows a compositional bias: basic and acidic residues. Polar residues predominate over residues 879-905 (KTQISFSTDSPDNFQESNDNTEFSSTK). Ser888 and Ser911 each carry phosphoserine. A compositionally biased stretch (basic and acidic residues) spans 918 to 931 (SLKKELTKAEVVDK). Residues 932 to 956 (LDEEESEDSYEQDYADPEPGNDEGS) are compositionally biased toward acidic residues. Phosphoserine occurs at positions 937, 1092, 1096, 1098, 1166, 1176, and 1178. The span at 1082–1096 (ENNTNMHDQVSQACS) shows a compositional bias: polar residues. The span at 1097-1115 (DSDRDQDSTAEKNVEGSAK) shows a compositional bias: basic and acidic residues. Positions 1197–1207 (STDASVNMKSV) are enriched in polar residues. Positions 1197 to 1216 (STDASVNMKSVSSKERDSDE) are disordered. Phosphoserine is present on residues Ser1214 and Ser1254. Over residues 1261 to 1272 (VKDKENLHKSEE) the composition is skewed to basic and acidic residues. Positions 1261–1315 (VKDKENLHKSEEPLVEGLQSEQHFEKKDHSENEEEFDTIYGDITSANIHSNAPDD) are disordered. Phosphoserine is present on residues Ser1290, Ser1326, and Ser1332. 2 disordered regions span residues 1334–1482 (RLIE…TSPE) and 1503–1658 (PATT…SVDK). Basic and acidic residues predominate over residues 1335 to 1366 (LIEDSRRGKNQEESDEVNTSRERDLTFEKSVN). Phosphoserine occurs at positions 1403, 1409, 1450, and 1454. The span at 1407–1423 (LNSEPEEAELYELEIEG) shows a compositional bias: acidic residues. The segment covering 1463–1479 (YPYSNSENITAEKSAPT) has biased composition (polar residues). Residues 1507 to 1537 (LEKHDKTNVTSVLDDRSEHLSSHDVDNEPHD) are compositionally biased toward basic and acidic residues. At Ser1539 the chain carries Phosphoserine. 2 stretches are compositionally biased toward basic and acidic residues: residues 1550–1564 (PEHQAVDIPVKVEVK) and 1575–1591 (VLEEQKPSMELINDKSS). A phosphoserine mark is found at Ser1590 and Ser1591. The segment covering 1607–1626 (TKAKKKSRKRNYNSRRRKRK) has biased composition (basic residues). Positions 1648–1658 (RGQNTHPSVDK) are enriched in polar residues.

As to quaternary structure, interacts with SIR4.

Its subcellular location is the nucleus. Functionally, involved in the clustering of telomeres at the nuclear periphery, forming discrete subcompartments that accumulate a complex of histone-binding silencing factors like SIR4. Required for SIR4-mediated anchoring and partitioning of plasmids. The protein is Silent chromatin protein ESC1 (ESC1) of Saccharomyces cerevisiae (strain ATCC 204508 / S288c) (Baker's yeast).